An 86-amino-acid chain; its full sequence is Gas vesicle protein M (86 aa).

This sequence belongs to the gas vesicle GvpA family. As to quaternary structure, gvpF to GvpM interact with each other in vitro, and may form multi-subunit complex(es). Might interact with GvpA.

The protein resides in the gas vesicle. In terms of biological role, proteins GvpF to GvpM might be involved in nucleating gas vesicle formation. A minor component of the gas vesicle. Gas vesicles are small, hollow, gas filled protein structures found in some microorganisms. They allow positioning of halobacteria at the optimal depth for growth in the poorly aerated, shallow brine pools of their habitat. Expression of a 9.5 kb mc-vac DNA fragment containing 2 divergently transcribed regions (gvpD-gvpE-gvpF-gvpG-gvpH-gvpI-gvpJ-gvpK-gvpL-gvpM and gvpA-gvpC-gvpN-gvpO) allows H.volcanii to produce gas vesicles. The chain is Gas vesicle protein M from Haloferax mediterranei (strain ATCC 33500 / DSM 1411 / JCM 8866 / NBRC 14739 / NCIMB 2177 / R-4) (Halobacterium mediterranei).